A 121-amino-acid chain; its full sequence is uncharacterized protein (121 aa).

This is an uncharacterized protein from Ictaluridae (bullhead catfishes).